We begin with the raw amino-acid sequence, 318 residues long: Thymidylate synthase (318 aa).

DUMP contacts are provided by residues R26 and 181-182 (RR). C201 acts as the Nucleophile in catalysis. DUMP-binding positions include 221–224 (RSAD), N232, and 262–264 (HIY). D224 serves as a coordination point for (6R)-5,10-methylene-5,6,7,8-tetrahydrofolate. Residue A317 participates in (6R)-5,10-methylene-5,6,7,8-tetrahydrofolate binding.

This sequence belongs to the thymidylate synthase family. Bacterial-type ThyA subfamily. In terms of assembly, homodimer.

Its subcellular location is the cytoplasm. The catalysed reaction is dUMP + (6R)-5,10-methylene-5,6,7,8-tetrahydrofolate = 7,8-dihydrofolate + dTMP. The protein operates within pyrimidine metabolism; dTTP biosynthesis. Catalyzes the reductive methylation of 2'-deoxyuridine-5'-monophosphate (dUMP) to 2'-deoxythymidine-5'-monophosphate (dTMP) while utilizing 5,10-methylenetetrahydrofolate (mTHF) as the methyl donor and reductant in the reaction, yielding dihydrofolate (DHF) as a by-product. This enzymatic reaction provides an intracellular de novo source of dTMP, an essential precursor for DNA biosynthesis. This Staphylococcus haemolyticus (strain JCSC1435) protein is Thymidylate synthase.